We begin with the raw amino-acid sequence, 361 residues long: Phospho-N-acetylmuramoyl-pentapeptide-transferase (361 aa).

10 helical membrane passes run 27 to 47, 72 to 92, 98 to 118, 135 to 155, 169 to 189, 200 to 220, 240 to 260, 263 to 283, 289 to 309, and 338 to 358; these read GAFFTALIFGFIFGRPLINLL, TPTMGGLLILSALTLATLLWA, YVWLVLFVTVSFGLIGFMDDF, LAMGFGIAGIAGAGALLLHPE, TLINLSILFIPFCMIVIAGSA, GLAIMPVMIAAGTLGVIAYAV, IFVFTSALIGGGLGFLWYNAP, AVFMGDTGSLALGGALGAIAV, IVLVVVGGIFVVEALSVIIQV, and QIVIRFWIISLILALIGLATL.

Belongs to the glycosyltransferase 4 family. MraY subfamily. Mg(2+) is required as a cofactor.

It is found in the cell inner membrane. It carries out the reaction UDP-N-acetyl-alpha-D-muramoyl-L-alanyl-gamma-D-glutamyl-meso-2,6-diaminopimeloyl-D-alanyl-D-alanine + di-trans,octa-cis-undecaprenyl phosphate = di-trans,octa-cis-undecaprenyl diphospho-N-acetyl-alpha-D-muramoyl-L-alanyl-D-glutamyl-meso-2,6-diaminopimeloyl-D-alanyl-D-alanine + UMP. It functions in the pathway cell wall biogenesis; peptidoglycan biosynthesis. Functionally, catalyzes the initial step of the lipid cycle reactions in the biosynthesis of the cell wall peptidoglycan: transfers peptidoglycan precursor phospho-MurNAc-pentapeptide from UDP-MurNAc-pentapeptide onto the lipid carrier undecaprenyl phosphate, yielding undecaprenyl-pyrophosphoryl-MurNAc-pentapeptide, known as lipid I. This Dinoroseobacter shibae (strain DSM 16493 / NCIMB 14021 / DFL 12) protein is Phospho-N-acetylmuramoyl-pentapeptide-transferase.